The primary structure comprises 116 residues: NADH-ubiquinone oxidoreductase chain 3 (116 aa).

The next 3 helical transmembrane spans lie at 8-28 (VAATALISLILAFVAFWLPSL), 56-76 (FFLVAILFLLFDLEIALLLPL), and 87-107 (ISLLWATSIIILLTLGLIYEW).

It belongs to the complex I subunit 3 family.

The protein localises to the mitochondrion membrane. It carries out the reaction a ubiquinone + NADH + 5 H(+)(in) = a ubiquinol + NAD(+) + 4 H(+)(out). In terms of biological role, core subunit of the mitochondrial membrane respiratory chain NADH dehydrogenase (Complex I) that is believed to belong to the minimal assembly required for catalysis. Complex I functions in the transfer of electrons from NADH to the respiratory chain. The immediate electron acceptor for the enzyme is believed to be ubiquinone. The protein is NADH-ubiquinone oxidoreductase chain 3 (MT-ND3) of Squalus acanthias (Spiny dogfish).